Consider the following 676-residue polypeptide: MEKNLPDIFFFPNCVNVFSYKYSQDEFSNMSKTERDNFSLAVFPVIKHRWHNAHVVKHKGIYKVSTEARGKKVSPPSLGKPAHINLMSKQYIYSEYAISFECYSFLKCITNTEINSFDEYILRGLLEAGNSLQIFSNSVGKRIDTIGVLGNKYPFSKIPLASLTPKAQREIFLAWISHRPVVLTGGTGVGKTSQVPKLLLWFNYLFGGFSSLDKITDFHERPVILSLPRIALVRLHSNTILKSLGFKVLDGSPISLRYGSIPEELINKQPKKYGIVFSTHKLSLTKLFSYGTIIIDEVHEHDQIGDIIIAVARKHHTKIDSMFLMTATLEDDRERLKIFLPNPAFIHIPGDTLFKISEVFIHNKINPSSRMAYIEEEKRNLVTAIQMYTPPDGSSGIVFVASVAQCHEYKSYLEKRLPYDMYIIHGKVLDIDEILEKVYSSPNVSIIISTPYLESSVTIRNVTHIYDMGRVFVPAPFGGSQQFISKSMRDQRKGRVGRVNPGTYVYFYDLSYMKSIQRIDSEFLHNYILYANKFNLTLPEDLFIIPTNLDILWRTKEYIDSFDISTETWNKLLSNYYMKMIEYAKLYVLSPILAEELDNFERTGELTSIVQEAILSLNLQIKILKFKHKDDDTYIHFCRILFGVYNGTNATIYYHRPLTGYMNMISDTIFVPVDNN.

One can recognise a Helicase ATP-binding domain in the interval 172 to 347; the sequence is FLAWISHRPV…IFLPNPAFIH (176 aa). 185 to 192 lines the ATP pocket; that stretch reads GGTGVGKT. The short motif at 296–299 is the DEXH box element; the sequence is DEVH. One can recognise a Helicase C-terminal domain in the interval 366 to 535; that stretch reads NPSSRMAYIE…NYILYANKFN (170 aa).

This sequence belongs to the DEAD box helicase family. DEAH subfamily. In terms of assembly, monomer.

The protein resides in the virion. It catalyses the reaction ATP + H2O = ADP + phosphate + H(+). In terms of biological role, NTP-dependent helicase that catalyzes unidirectional unwinding of 3'tailed duplex RNAs and plays an important role during transcription of early mRNAs, presumably by preventing R-loop formation behind the elongating RNA polymerase. Might also play a role in the export of newly synthesized mRNA chains out of the core into the cytoplasm. Required for replication and propagation of viral particles. In Monkeypox virus, this protein is RNA helicase NPH-II (OPG084).